Consider the following 137-residue polypeptide: Small ribosomal subunit protein uS12 (137 aa).

The disordered stretch occupies residues 1–57 (MPTINQLVRKPRKSKVKKSKSPALNVGYNSRKKVQTNVSSPQKRGVATRVGTMTPKK). A compositionally biased stretch (basic residues) spans 9–20 (RKPRKSKVKKSK). 3-methylthioaspartic acid is present on Asp102.

The protein belongs to the universal ribosomal protein uS12 family. As to quaternary structure, part of the 30S ribosomal subunit. Contacts proteins S8 and S17. May interact with IF1 in the 30S initiation complex.

With S4 and S5 plays an important role in translational accuracy. In terms of biological role, interacts with and stabilizes bases of the 16S rRNA that are involved in tRNA selection in the A site and with the mRNA backbone. Located at the interface of the 30S and 50S subunits, it traverses the body of the 30S subunit contacting proteins on the other side and probably holding the rRNA structure together. The combined cluster of proteins S8, S12 and S17 appears to hold together the shoulder and platform of the 30S subunit. The polypeptide is Small ribosomal subunit protein uS12 (Streptococcus suis (strain 05ZYH33)).